We begin with the raw amino-acid sequence, 137 residues long: Cofilin-1A (137 aa).

Positions 2-135 (SSGIALAPNC…KDSCFYEKCT (134 aa)) constitute an ADF-H domain.

The protein belongs to the actin-binding proteins ADF family.

The protein resides in the nucleus matrix. The protein localises to the cytoplasm. It is found in the cytoskeleton. Functionally, controls reversibly actin polymerization and depolymerization in a pH-sensitive manner. It has the ability to bind G- and F-actin in a 1:1 ratio of cofilin to actin. It is the major component of intranuclear and cytoplasmic actin rods. This is Cofilin-1A (cofA) from Dictyostelium discoideum (Social amoeba).